The primary structure comprises 95 residues: MSVDLATVKRVARLARIAVSEDEANRMVGELNGILGFVEQLSEVNVDGVEAMTSVTPTAMKKRTDEVTDGSKAADIVANAPVTDHNFFLVPKVVE.

Belongs to the GatC family. In terms of assembly, heterotrimer of A, B and C subunits.

It carries out the reaction L-glutamyl-tRNA(Gln) + L-glutamine + ATP + H2O = L-glutaminyl-tRNA(Gln) + L-glutamate + ADP + phosphate + H(+). The catalysed reaction is L-aspartyl-tRNA(Asn) + L-glutamine + ATP + H2O = L-asparaginyl-tRNA(Asn) + L-glutamate + ADP + phosphate + 2 H(+). Functionally, allows the formation of correctly charged Asn-tRNA(Asn) or Gln-tRNA(Gln) through the transamidation of misacylated Asp-tRNA(Asn) or Glu-tRNA(Gln) in organisms which lack either or both of asparaginyl-tRNA or glutaminyl-tRNA synthetases. The reaction takes place in the presence of glutamine and ATP through an activated phospho-Asp-tRNA(Asn) or phospho-Glu-tRNA(Gln). The polypeptide is Aspartyl/glutamyl-tRNA(Asn/Gln) amidotransferase subunit C (Rhizobium johnstonii (strain DSM 114642 / LMG 32736 / 3841) (Rhizobium leguminosarum bv. viciae)).